A 454-amino-acid polypeptide reads, in one-letter code: tRNA modification GTPase MnmE (454 aa).

Positions 23, 80, and 120 each coordinate (6S)-5-formyl-5,6,7,8-tetrahydrofolate. The 162-residue stretch at 216–377 folds into the TrmE-type G domain; the sequence is GMKVVIAGRP…LRNHLKQSMG (162 aa). A K(+)-binding site is contributed by asparagine 226. Residues 226–231, 245–251, 270–273, 335–338, and 358–360 each bind GTP; these read NAGKSS, TDIAGTT, DTAG, NKAD, and SAR. Serine 230 lines the Mg(2+) pocket. Positions 245, 247, and 250 each coordinate K(+). A Mg(2+)-binding site is contributed by threonine 251. Residue lysine 454 participates in (6S)-5-formyl-5,6,7,8-tetrahydrofolate binding.

It belongs to the TRAFAC class TrmE-Era-EngA-EngB-Septin-like GTPase superfamily. TrmE GTPase family. In terms of assembly, homodimer. Heterotetramer of two MnmE and two MnmG subunits. The cofactor is K(+).

It localises to the cytoplasm. In terms of biological role, exhibits a very high intrinsic GTPase hydrolysis rate. Involved in the addition of a carboxymethylaminomethyl (cmnm) group at the wobble position (U34) of certain tRNAs, forming tRNA-cmnm(5)s(2)U34. The chain is tRNA modification GTPase MnmE from Salmonella choleraesuis (strain SC-B67).